The sequence spans 376 residues: Protein RecA (376 aa).

65–72 (GPESSGKT) contributes to the ATP binding site. The interval 316-376 (EHDEIFTSVR…GDDLSDDDIY (61 aa)) is disordered. Residues 331–350 (GEKKDSDEDPGDNKKSKDSA) are compositionally biased toward basic and acidic residues. Acidic residues predominate over residues 366-376 (PGDDLSDDDIY).

Belongs to the RecA family.

The protein resides in the cytoplasm. Can catalyze the hydrolysis of ATP in the presence of single-stranded DNA, the ATP-dependent uptake of single-stranded DNA by duplex DNA, and the ATP-dependent hybridization of homologous single-stranded DNAs. It interacts with LexA causing its activation and leading to its autocatalytic cleavage. This chain is Protein RecA, found in Oenococcus oeni (strain ATCC BAA-331 / PSU-1).